The primary structure comprises 676 residues: Zinc finger CCCH domain-containing protein 38 (676 aa).

Disordered regions lie at residues Met1–Phe134, Ser172–Asn217, Arg245–Asp307, Ser487–Gln506, and Ile533–Gly594. A compositionally biased stretch (basic and acidic residues) spans Ser12–His21. The span at Arg58 to Val79 shows a compositional bias: polar residues. 3 stretches are compositionally biased toward basic and acidic residues: residues Ala101–Arg110, Glu124–Phe134, and Ser192–Phe212. The segment at Arg214–Ala243 adopts a C3H1-type zinc-finger fold. The span at Asn251–Asn262 shows a compositional bias: low complexity. Basic and acidic residues predominate over residues Lys269–Asn278. Positions Leu538–Glu562 are enriched in basic and acidic residues. The span at Asp563–Asp583 shows a compositional bias: acidic residues. Over residues Glu584 to Gly594 the composition is skewed to basic and acidic residues.

The protein is Zinc finger CCCH domain-containing protein 38 of Arabidopsis thaliana (Mouse-ear cress).